The primary structure comprises 167 residues: uncharacterized protein (167 aa).

A run of 2 helical transmembrane segments spans residues 21-41 and 87-107; these read KIGL…IYKP and MIIT…YVFG. Positions 136-159 are enriched in basic and acidic residues; it reads RKQRLKEQREKKEQKKEQKKEKKT. Residues 136 to 167 form a disordered region; it reads RKQRLKEQREKKEQKKEQKKEKKTERRKKKKL.

The protein localises to the membrane. This is an uncharacterized protein from Schizosaccharomyces pombe (strain 972 / ATCC 24843) (Fission yeast).